The sequence spans 235 residues: 7-cyano-7-deazaguanine synthase (235 aa).

Phe-10–Leu-20 contributes to the ATP binding site. Zn(2+) contacts are provided by Cys-198, Cys-213, Cys-216, and Cys-219.

It belongs to the QueC family. Requires Zn(2+) as cofactor.

It carries out the reaction 7-carboxy-7-deazaguanine + NH4(+) + ATP = 7-cyano-7-deazaguanine + ADP + phosphate + H2O + H(+). It participates in purine metabolism; 7-cyano-7-deazaguanine biosynthesis. Its function is as follows. Catalyzes the ATP-dependent conversion of 7-carboxy-7-deazaguanine (CDG) to 7-cyano-7-deazaguanine (preQ(0)). The polypeptide is 7-cyano-7-deazaguanine synthase (Paracidovorax citrulli (strain AAC00-1) (Acidovorax citrulli)).